Consider the following 243-residue polypeptide: uncharacterized protein (243 aa).

It is found in the nucleus. It localises to the nucleolus. This is an uncharacterized protein from Schizosaccharomyces pombe (strain 972 / ATCC 24843) (Fission yeast).